The sequence spans 247 residues: Uridylate kinase (247 aa).

21–24 (KVSG) lines the ATP pocket. Gly63 serves as a coordination point for UMP. Residues Gly64 and Arg68 each contribute to the ATP site. UMP is bound by residues Asp83 and 144 to 151 (TGNPFCTT). ATP-binding residues include Thr171, Gln172, Tyr177, and Asp180.

This sequence belongs to the UMP kinase family. As to quaternary structure, homohexamer.

It localises to the cytoplasm. It carries out the reaction UMP + ATP = UDP + ADP. Its pathway is pyrimidine metabolism; CTP biosynthesis via de novo pathway; UDP from UMP (UMPK route): step 1/1. Its activity is regulated as follows. Inhibited by UTP. In terms of biological role, catalyzes the reversible phosphorylation of UMP to UDP. This Rickettsia rickettsii (strain Sheila Smith) protein is Uridylate kinase.